Here is a 243-residue protein sequence, read N- to C-terminus: Phosphoribosylaminoimidazole-succinocarboxamide synthase (243 aa).

The protein belongs to the SAICAR synthetase family.

It catalyses the reaction 5-amino-1-(5-phospho-D-ribosyl)imidazole-4-carboxylate + L-aspartate + ATP = (2S)-2-[5-amino-1-(5-phospho-beta-D-ribosyl)imidazole-4-carboxamido]succinate + ADP + phosphate + 2 H(+). Its pathway is purine metabolism; IMP biosynthesis via de novo pathway; 5-amino-1-(5-phospho-D-ribosyl)imidazole-4-carboxamide from 5-amino-1-(5-phospho-D-ribosyl)imidazole-4-carboxylate: step 1/2. This is Phosphoribosylaminoimidazole-succinocarboxamide synthase from Prochlorococcus marinus (strain MIT 9211).